The sequence spans 949 residues: Copper-transporting ATPase PAA1, chloroplastic (949 aa).

The transit peptide at 1–103 directs the protein to the chloroplast; it reads MESTLSAFST…SSSPSFRSIS (103 aa). Positions 113–126 are enriched in gly residues; the sequence is YNGGSGGGGGGGSE. Positions 113-142 are disordered; sequence YNGGSGGGGGGGSESGDSKSKLGANASDGV. The HMA domain maps to 148-222; it reads DIIILDVGGM…HLTNCGFQST (75 aa). Positions 159 and 162 each coordinate Cu(+). 6 helical membrane-spanning segments follow: residues 253-274, 287-306, 314-334, 349-369, 502-524, and 543-560; these read LAVSWALCAVCLVGHLTHFLGV, FHVSLCLITLLGPGRKLVLD, GSPNMNTLVGLGALSSFSVSS, EEPVMLIAFVLLGRNLEQRAK, VAGRFTYGVMALSAATFTFWNLF, and LQLSCSVLVVACPCALGL. The active-site 4-aspartylphosphate intermediate is Asp598. Position 807 to 814 (807 to 814) interacts with ATP; it reads GDGINDAA. 2 residues coordinate Mg(2+): Asp808 and Asp812. A run of 2 helical transmembrane segments spans residues 863–882 and 895–913; these read KQNLWWAFGYNIVGIPIAAG and SMAGALMGVSSLGVMTNSL. Positions 925 to 949 are disordered; it reads DKNVKPEPKEGTKQPHENTRWKQSS.

It belongs to the cation transport ATPase (P-type) (TC 3.A.3) family. Type IB subfamily. In terms of tissue distribution, expressed in the shoots and roots.

Its subcellular location is the plastid. It is found in the chloroplast membrane. The catalysed reaction is Cu(+)(in) + ATP + H2O = Cu(+)(out) + ADP + phosphate + H(+). In terms of biological role, mediates copper transfer across the plastid envelope. Required for the delivery of copper into the plastid stroma, which is essential for the function of copper proteins. Seems to be selective for monovalent copper Cu(+) transport. Also plays a role in glucose signaling-mediated cell proliferation of root meristem in non-green tissues. The polypeptide is Copper-transporting ATPase PAA1, chloroplastic (PAA1) (Arabidopsis thaliana (Mouse-ear cress)).